Here is a 709-residue protein sequence, read N- to C-terminus: Polyribonucleotide nucleotidyltransferase (709 aa).

Mg(2+) is bound by residues Asp490 and Asp496. Residues 557-616 (PKVITMRVLPEKIPVIIGPSGKNIKKIIDETGVKIDLDQEGLVRIYAVDGESADKAKEMI) enclose the KH domain. Residues 626 to 694 (GEVYMGKVTR…EMGRAKVSLK (69 aa)) enclose the S1 motif domain.

The protein belongs to the polyribonucleotide nucleotidyltransferase family. Requires Mg(2+) as cofactor.

The protein localises to the cytoplasm. The enzyme catalyses RNA(n+1) + phosphate = RNA(n) + a ribonucleoside 5'-diphosphate. Functionally, involved in mRNA degradation. Catalyzes the phosphorolysis of single-stranded polyribonucleotides processively in the 3'- to 5'-direction. The chain is Polyribonucleotide nucleotidyltransferase from Persephonella marina (strain DSM 14350 / EX-H1).